Here is a 66-residue protein sequence, read N- to C-terminus: Large ribosomal subunit protein bL33c (66 aa).

The protein belongs to the bacterial ribosomal protein bL33 family.

The protein localises to the plastid. This chain is Large ribosomal subunit protein bL33c (rpl33), found in Epifagus virginiana (Beechdrops).